A 326-amino-acid polypeptide reads, in one-letter code: Phospho-N-acetylmuramoyl-pentapeptide-transferase (326 aa).

The next 9 helical transmembrane spans lie at 3–23 (ISISAGVVTFLITLVGIPAFI), 51–71 (TMGGLVFLIAAVVVSFLLALF), 79–99 (VGMILFILVLYGLVGFLDDFL), 115–135 (LALQLLGGVIFYLFYERGGDM), 138–158 (VFSYQVHLGIFYIIFALFWLV), 169–189 (GIDGLASISVVISLSAYGVIA), 195–215 (MDILLVILAMIGGLLGFFVFN), 221–243 (VFMGDVGSLALGGMLAAISMALH), and 306–326 (FFFWGVGLLASLLTLAILYLM).

The protein belongs to the glycosyltransferase 4 family. MraY subfamily. The cofactor is Mg(2+).

It localises to the cell membrane. The enzyme catalyses UDP-N-acetyl-alpha-D-muramoyl-L-alanyl-gamma-D-glutamyl-L-lysyl-D-alanyl-D-alanine + di-trans,octa-cis-undecaprenyl phosphate = Mur2Ac(oyl-L-Ala-gamma-D-Glu-L-Lys-D-Ala-D-Ala)-di-trans,octa-cis-undecaprenyl diphosphate + UMP. Its pathway is cell wall biogenesis; peptidoglycan biosynthesis. Its function is as follows. Catalyzes the initial step of the lipid cycle reactions in the biosynthesis of the cell wall peptidoglycan: transfers peptidoglycan precursor phospho-MurNAc-pentapeptide from UDP-MurNAc-pentapeptide onto the lipid carrier undecaprenyl phosphate, yielding undecaprenyl-pyrophosphoryl-MurNAc-pentapeptide, known as lipid I. This is Phospho-N-acetylmuramoyl-pentapeptide-transferase from Streptococcus pneumoniae (strain ATCC 700669 / Spain 23F-1).